We begin with the raw amino-acid sequence, 392 residues long: MTLADRWLLPEGVDEALPEQAAKIEHLRRTLLNLHESWGYHLVIPPLLEYLDSLLTGAGSDLEIETFKVIDQLSGRLLGIRADFTSQVARIDAHCLKDDGVQRLSYCGSVLRTMPAGLDGTRSPIQLGAEIYGHGGVESDVEVLSLMLQTLSTAGLSNLVLDLGHVDIVSGVLAACNLNADQESKLIELYKAKDLPELDRYAEELGCLTDIQKQWLVGLPRLCGGKEVLKHATDLLGDVNESIRDAIVLLQKVSDSICQRFPKVGLHFDLSDLVSYSYHTGVIFAAYVPGHGNAIARGGRYNNIGQVFGRSRPATGFSTDVKALVALTDIVVNKPKTVLSPICSSDELWQKANSLRAEGYRVVEVLDDICAGDADFKLEFVDEAWQLMPVHN.

Belongs to the class-II aminoacyl-tRNA synthetase family. HisZ subfamily. As to quaternary structure, heteromultimer composed of HisG and HisZ subunits.

Its subcellular location is the cytoplasm. The protein operates within amino-acid biosynthesis; L-histidine biosynthesis; L-histidine from 5-phospho-alpha-D-ribose 1-diphosphate: step 1/9. Required for the first step of histidine biosynthesis. May allow the feedback regulation of ATP phosphoribosyltransferase activity by histidine. This is ATP phosphoribosyltransferase regulatory subunit from Marinomonas sp. (strain MWYL1).